A 445-amino-acid chain; its full sequence is Phosphoglucosamine mutase (445 aa).

S102 serves as the catalytic Phosphoserine intermediate. Mg(2+) is bound by residues S102, D241, D243, and D245. Residue S102 is modified to Phosphoserine.

Belongs to the phosphohexose mutase family. It depends on Mg(2+) as a cofactor. Post-translationally, activated by phosphorylation.

The enzyme catalyses alpha-D-glucosamine 1-phosphate = D-glucosamine 6-phosphate. Catalyzes the conversion of glucosamine-6-phosphate to glucosamine-1-phosphate. This Shewanella sp. (strain W3-18-1) protein is Phosphoglucosamine mutase.